A 174-amino-acid chain; its full sequence is MTRILGIDPGSQRTGIGIIDIDEGGRSRHVHHAPLILLGEGDFSQRLKRLLHGLGELIETYRPDEVAIEKVFMGKSAASALKLGHARGAAICAVVMRDLPVHEYAATEVKLALVGKGGADKVQVQHMVGIMLNLKGKLQPDAADALAVAITHAHVRATAQCLGVNTQQAWSRKK.

Active-site residues include Asp-8, Glu-69, and Asp-141. Residues Asp-8, Glu-69, and Asp-141 each contribute to the Mg(2+) site.

Belongs to the RuvC family. Homodimer which binds Holliday junction (HJ) DNA. The HJ becomes 2-fold symmetrical on binding to RuvC with unstacked arms; it has a different conformation from HJ DNA in complex with RuvA. In the full resolvosome a probable DNA-RuvA(4)-RuvB(12)-RuvC(2) complex forms which resolves the HJ. Mg(2+) serves as cofactor.

The protein localises to the cytoplasm. It carries out the reaction Endonucleolytic cleavage at a junction such as a reciprocal single-stranded crossover between two homologous DNA duplexes (Holliday junction).. The RuvA-RuvB-RuvC complex processes Holliday junction (HJ) DNA during genetic recombination and DNA repair. Endonuclease that resolves HJ intermediates. Cleaves cruciform DNA by making single-stranded nicks across the HJ at symmetrical positions within the homologous arms, yielding a 5'-phosphate and a 3'-hydroxyl group; requires a central core of homology in the junction. The consensus cleavage sequence is 5'-(A/T)TT(C/G)-3'. Cleavage occurs on the 3'-side of the TT dinucleotide at the point of strand exchange. HJ branch migration catalyzed by RuvA-RuvB allows RuvC to scan DNA until it finds its consensus sequence, where it cleaves and resolves the cruciform DNA. The polypeptide is Crossover junction endodeoxyribonuclease RuvC (Xanthomonas oryzae pv. oryzae (strain PXO99A)).